The following is a 196-amino-acid chain: Holliday junction branch migration complex subunit RuvA (196 aa).

The tract at residues 1 to 63 is domain I; the sequence is MYEYFKGIIS…EDAELLYGFA (63 aa). Residues 64–142 form a domain II region; the sequence is TEEEKQLFLS…AAGSPAESKA (79 aa). The interval 143 to 146 is flexible linker; that stretch reads PVQT. The domain III stretch occupies residues 147–196; the sequence is ADNQELEEAMEAMLALGYKAAELKKIKKFFEGTTDTAENYIKSALKMLVK.

It belongs to the RuvA family. As to quaternary structure, homotetramer. Forms an RuvA(8)-RuvB(12)-Holliday junction (HJ) complex. HJ DNA is sandwiched between 2 RuvA tetramers; dsDNA enters through RuvA and exits via RuvB. An RuvB hexamer assembles on each DNA strand where it exits the tetramer. Each RuvB hexamer is contacted by two RuvA subunits (via domain III) on 2 adjacent RuvB subunits; this complex drives branch migration. In the full resolvosome a probable DNA-RuvA(4)-RuvB(12)-RuvC(2) complex forms which resolves the HJ.

The protein resides in the cytoplasm. Functionally, the RuvA-RuvB-RuvC complex processes Holliday junction (HJ) DNA during genetic recombination and DNA repair, while the RuvA-RuvB complex plays an important role in the rescue of blocked DNA replication forks via replication fork reversal (RFR). RuvA specifically binds to HJ cruciform DNA, conferring on it an open structure. The RuvB hexamer acts as an ATP-dependent pump, pulling dsDNA into and through the RuvAB complex. HJ branch migration allows RuvC to scan DNA until it finds its consensus sequence, where it cleaves and resolves the cruciform DNA. This is Holliday junction branch migration complex subunit RuvA from Streptococcus sanguinis (strain SK36).